The sequence spans 762 residues: Probable inorganic carbon transporter subunit DabA (762 aa).

Zn(2+) is bound by residues Cys-279, Asp-281, His-461, and Cys-476.

This sequence belongs to the inorganic carbon transporter (TC 9.A.2) DabA family. As to quaternary structure, forms a complex with DabB. It depends on Zn(2+) as a cofactor.

It is found in the cell inner membrane. In terms of biological role, part of an energy-coupled inorganic carbon pump. The chain is Probable inorganic carbon transporter subunit DabA from Legionella pneumophila (strain Corby).